The following is a 779-amino-acid chain: Serine/threonine-protein kinase SIK1 (779 aa).

Positions Tyr-27–Met-278 constitute a Protein kinase domain. ATP-binding positions include Leu-33–Val-41 and Lys-56. Residue Asp-149 is the Proton acceptor of the active site. Phosphothreonine; by LKB1 and GSK3-beta is present on Thr-182. Ser-186 is subject to Phosphoserine; by autocatalysis. Positions Asp-303–Glu-343 constitute a UBA domain. At Thr-322 the chain carries Phosphothreonine; by CaMK1. 2 disordered regions span residues Ser-350–Leu-375 and Glu-449–Arg-472. Residues Arg-363–Ser-373 show a composition bias toward polar residues. Position 577 is a phosphoserine; by PKA (Ser-577). The segment at Lys-586 to Arg-612 is RK-rich region. The tract at residues Thr-621 to Cys-641 is disordered. The segment covering Thr-628 to Cys-641 has biased composition (polar residues).

The protein belongs to the protein kinase superfamily. CAMK Ser/Thr protein kinase family. AMPK subfamily. As to quaternary structure, interacts (when phosphorylated on Thr-182 and Ser-186) with YWHAZ. Interacts with ATP1A1. It depends on Mg(2+) as a cofactor. Post-translationally, phosphorylated at Thr-182 by STK11/LKB1 in complex with STE20-related adapter-alpha (STRADA) pseudo kinase and CAB39, leading to its activation. Phosphorylation at Thr-182 promotes autophosphorylation at Ser-186, which is required for sustained activity. Autophosphorylation at Ser-186 is maintained by sequential phosphorylation at Thr-182 by GSK3-beta. GSK3-beta cannot initiate phosphorylation at Thr-182, it can only maintain it. Phosphorylation at Ser-577 by PKA promotes translocation to the cytoplasm. Phosphorylation at Thr-322 by CaMK1 following intracellular sodium concentration leads to activation. In terms of tissue distribution, expressed in lung, skin, ovary, heart and stomach. No expression in brain, liver or adult skeletal muscle but is present in skeletal muscle progenitor cells of the somite beginning at 9.5 dpc. Present at 8.0 dpc in the monolayer of presumptive myocardial cells but rapidly down-regulated at 8.5 dpc upon primitive ventricle formation, although still present in myocardial cells that will populate the primitive atrium and bulbus cordis. At 9.5 dpc expression is down-regulated in the primitive atrium but observed in the sinus venosus and truncus arteriosus.

Its subcellular location is the cytoplasm. It localises to the nucleus. It carries out the reaction L-seryl-[protein] + ATP = O-phospho-L-seryl-[protein] + ADP + H(+). The enzyme catalyses L-threonyl-[protein] + ATP = O-phospho-L-threonyl-[protein] + ADP + H(+). With respect to regulation, activated by phosphorylation on Thr-182. Also activated by phosphorylation on Thr-322 in response to increases in intracellular sodium in parallel with elevations in intracellular calcium through the reversible sodium/calcium exchanger. Functionally, serine/threonine-protein kinase involved in various processes such as cell cycle regulation, gluconeogenesis and lipogenesis regulation, muscle growth and differentiation and tumor suppression. Phosphorylates HDAC4, HDAC5, PPME1, SREBF1, CRTC1/TORC1 and CRTC2/TORC2. Acts as a tumor suppressor and plays a key role in p53/TP53-dependent anoikis, a type of apoptosis triggered by cell detachment: required for phosphorylation of p53/TP53 in response to loss of adhesion and is able to suppress metastasis. Part of a sodium-sensing signaling network, probably by mediating phosphorylation of PPME1: following increases in intracellular sodium, SIK1 is activated by CaMK1 and phosphorylates PPME1 subunit of protein phosphatase 2A (PP2A), leading to dephosphorylation of sodium/potassium-transporting ATPase ATP1A1 and subsequent increase activity of ATP1A1. Acts as a regulator of muscle cells by phosphorylating and inhibiting class II histone deacetylases HDAC4 and HDAC5, leading to promote expression of MEF2 target genes in myocytes. Also required during cardiomyogenesis by regulating the exit of cardiomyoblasts from the cell cycle via down-regulation of CDKN1C/p57Kip2. Acts as a regulator of hepatic gluconeogenesis by phosphorylating and repressing the CREB-specific coactivators CRTC1/TORC1 and CRTC2/TORC2, leading to inhibit CREB activity. Also regulates hepatic lipogenesis by phosphorylating and inhibiting SREBF1. In concert with CRTC1/TORC1, regulates the light-induced entrainment of the circadian clock by attenuating PER1 induction; represses CREB-mediated transcription of PER1 by phosphorylating and deactivating CRTC1/TORC1. In Mus musculus (Mouse), this protein is Serine/threonine-protein kinase SIK1 (Sik1).